The primary structure comprises 97 residues: U6-theraphotoxin-Hhn1a 3 (97 aa).

A signal peptide spans 1–33 (MLIKQFSRRSKNTKVQILLAFAALFVLAVGSYA). Positions 34 to 61 (SESKKLDLRDALFSAMFSADYQLNPQER) are excised as a propeptide. Disulfide bonds link Cys-63-Cys-77, Cys-70-Cys-82, and Cys-76-Cys-89.

The protein belongs to the neurotoxin 10 (Hwtx-1) family. 12 (Hntx-12) subfamily. Expressed by the venom gland.

It is found in the secreted. In terms of biological role, ion channel inhibitor. The sequence is that of U6-theraphotoxin-Hhn1a 3 from Cyriopagopus hainanus (Chinese bird spider).